The sequence spans 613 residues: Chaperone protein dnaK (613 aa).

This sequence belongs to the heat shock protein 70 family.

The protein resides in the plastid. Its subcellular location is the chloroplast. Acts as a chaperone. In Phaeodactylum tricornutum (strain CCAP 1055/1), this protein is Chaperone protein dnaK.